Consider the following 437-residue polypeptide: UDP-sugar transporter protein SLC35A5 (437 aa).

Residues 1–21 are Cytoplasmic-facing; the sequence is MKVIFLRQLKTRGMERKCSRR. A helical transmembrane segment spans residues 22–42; sequence PGLGPPTLYTFLLGIIFITLS. At 43–65 the chain is on the lumenal side; the sequence is SSRILLVKYSANEENKYDYLPTT. A helical transmembrane segment spans residues 66–86; it reads VNVCSELMKLILCILVSLCVI. Topologically, residues 87–106 are cytoplasmic; the sequence is KKEDHQSRHLRCTSWKEFSS. The helical transmembrane segment at 107-129 threads the bilayer; it reads FMKWSIPAFLYFLDNLIVFYVLS. Residues 130-132 are Lumenal-facing; sequence YLQ. The chain crosses the membrane as a helical span at residues 133-155; it reads PAMAVIFSNFSIITTALLFRIVL. Topologically, residues 156 to 158 are cytoplasmic; the sequence is KRH. The chain crosses the membrane as a helical span at residues 159-179; that stretch reads LNWIQWASLLILFLSIVALTA. Residues 180–241 are Lumenal-facing; sequence STKTSQHELA…TTARVFSHIR (62 aa). Asparagine 217 is a glycosylation site (N-linked (GlcNAc...) asparagine). A helical membrane pass occupies residues 242–262; that stretch reads LGLGHVLIIVQCFISSMANIY. Topologically, residues 263–276 are cytoplasmic; the sequence is NEKILKEGTQLTES. A helical transmembrane segment spans residues 277 to 297; the sequence is IFIQNSKLYFFGIVFNGLTLV. At 298 to 316 the chain is on the lumenal side; that stretch reads LQSSNRDQIQNCGFFYGHN. The chain crosses the membrane as a helical span at residues 317–337; that stretch reads AFSVVLIFVTAFQGLSVAFIL. The Cytoplasmic segment spans residues 338–343; the sequence is KFLDNM. The chain crosses the membrane as a helical span at residues 344–364; it reads FHVLMAQVTTVIITTVSVLVF. Topologically, residues 365–367 are lumenal; it reads DFR. The chain crosses the membrane as a helical span at residues 368 to 388; it reads PSLDFFLEAPSVLLSIFIYNA. Residues 389 to 437 are Cytoplasmic-facing; that stretch reads SKPQNLECAPKQERIRHLSGSLWERSSGDGEELERLTKLKSDDSDDDTL. 3 positions are modified to phosphoserine: serine 407, serine 429, and serine 432. Residues 412–437 form a disordered region; it reads ERSSGDGEELERLTKLKSDDSDDDTL. The segment covering 421–430 has biased composition (basic and acidic residues); sequence LERLTKLKSD.

This sequence belongs to the nucleotide-sugar transporter family. SLC35A subfamily. Probably forms homooligomers and heterooligomers with SLC35A1, SLC35A2, SLC35A3 and SLC35A4.

Its subcellular location is the golgi apparatus membrane. It catalyses the reaction UMP(out) + UDP-alpha-D-glucuronate(in) = UMP(in) + UDP-alpha-D-glucuronate(out). The enzyme catalyses UMP(out) + UDP-N-acetyl-alpha-D-glucosamine(in) = UMP(in) + UDP-N-acetyl-alpha-D-glucosamine(out). It carries out the reaction UDP-N-acetyl-alpha-D-galactosamine(in) + UMP(out) = UDP-N-acetyl-alpha-D-galactosamine(out) + UMP(in). Its function is as follows. Probable UDP-sugar:UMP transmembrane antiporter involved in UDP-alpha-D-glucuronate/UDP-GlcA, UDP-GlcNAc/UDP-N-acetyl-alpha-D-glucosamine and UDP-N-acetyl-alpha-D-galactosamine/UDP-GalNAc transport from the cytosol to the lumen of the Golgi. The protein is UDP-sugar transporter protein SLC35A5 of Mus musculus (Mouse).